A 522-amino-acid polypeptide reads, in one-letter code: Target of rapamycin complex 2 subunit MAPKAP1 (522 aa).

Ala2 is subject to N-acetylalanine. Residues 2 to 184 (AFLDNPTIIL…KKIDVYLPLH (183 aa)) form an interaction with MAP3K2 region. Positions 2-267 (AFLDNPTIIL…GFSTLALVEK (266 aa)) are interaction with NBN. At Thr86 the chain carries Phosphothreonine. Phosphoserine is present on residues Ser128, Ser186, Ser315, and Ser356. Positions 139–267 (QSILSVRLEQ…GFSTLALVEK (129 aa)) constitute a CRIM domain. The SIN1-type RBD stretch occupies residues 279–353 (LFVRINAAHG…QSAWEFCQVR (75 aa)). An SIN1-type PH domain is found at 382 to 487 (HYKSFKVSMI…IVLKVNYILE (106 aa)). Residue Arg393 coordinates a 1,2-diacyl-sn-glycero-3-phospho-(1D-myo-inositol-3,4,5-trisphosphate). Thr398 is modified (phosphothreonine). A 1,2-diacyl-sn-glycero-3-phospho-(1D-myo-inositol-3,4,5-trisphosphate) is bound by residues Lys428 and Lys464. Positions 468 to 522 (FESDAATVNEIVLKVNYILESRASTARADYFAQKQRKLNRRTSFSFQKEKKSGQQ) are interaction with ATF2. Ser510 carries the post-translational modification Phosphoserine.

This sequence belongs to the SIN1 family. In terms of assembly, component of the mechanistic target of rapamycin complex 2 (mTORC2), consisting in two heterotretramers composed of MTOR, MLST8, RICTOR and MAPKAP1/SIN1. The mTORC2 core complex associates with PRR5/PROTOR1 and/or PRR5L/PROTOR2. Contrary to mTORC1, mTORC2 does not bind to and is not sensitive to FKBP12-rapamycin. Interacts with MAP3K2. Interacts with ATF2. Interacts with MAPK8. Interacts with GTP-bound HRAS and KRAS; inhibiting their activity. Interacts with IFNAR2. Phosphorylation at Ser-128 by PKC promotes relocalization to the perinuclear region, where the mTORC2 complex specifically mediates phosphorylation of SGK1. Phosphorylated at Thr-86 by AKT1 or RPS6KB1 in the presence of growth factors; the effect of this phosphorylation is however unclear. According to two studies, phosphorylation at Thr-86 by AKT1 is part of a positive feedback loop that increases mTORC2 activation. According to another study, phosphorylation at Thr-86 and Thr-398 by RPS6KB1 promotes dissociation from the mTORC2 complex, leading to inhibit mTORC2 signaling.

It localises to the cell membrane. The protein localises to the endoplasmic reticulum membrane. It is found in the early endosome membrane. Its subcellular location is the late endosome membrane. The protein resides in the lysosome membrane. It localises to the golgi apparatus membrane. The protein localises to the mitochondrion outer membrane. It is found in the cytoplasm. Its subcellular location is the perinuclear region. The protein resides in the nucleus. Phosphatidylinositol 3,4,5-trisphosphate (PI(3,4,5)P3) promotes MTOR activation by relieving MAPKAP1/SIN1-mediated inhibition of MTOR that takes place in absence of PI(3,4,5)P3. Component of the mechanistic target of rapamycin complex 2 (mTORC2), which transduces signals from growth factors to pathways involved in proliferation, cytoskeletal organization, lipogenesis and anabolic output. In response to growth factors, mTORC2 phosphorylates and activates AGC protein kinase family members, including AKT (AKT1, AKT2 and AKT3), PKC (PRKCA, PRKCB and PRKCE) and SGK1. In contrast to mTORC1, mTORC2 is nutrient-insensitive. Within the mTORC2 complex, MAPKAP1/SIN1 acts as a substrate adapter which recognizes and binds AGC protein kinase family members for phosphorylation by MTOR. mTORC2 plays a critical role in AKT1 activation by mediating phosphorylation of different sites depending on the context, such as 'Thr-450', 'Ser-473', 'Ser-477' or 'Thr-479', facilitating the phosphorylation of the activation loop of AKT1 on 'Thr-308' by PDPK1/PDK1 which is a prerequisite for full activation. mTORC2 catalyzes the phosphorylation of SGK1 at 'Ser-422' and of PRKCA on 'Ser-657'. The mTORC2 complex also phosphorylates various proteins involved in insulin signaling, such as FBXW8 and IGF2BP1. mTORC2 acts upstream of Rho GTPases to regulate the actin cytoskeleton, probably by activating one or more Rho-type guanine nucleotide exchange factors. mTORC2 promotes the serum-induced formation of stress-fibers or F-actin. MAPKAP1 inhibits MAP3K2 by preventing its dimerization and autophosphorylation. Inhibits HRAS and KRAS independently of mTORC2 complex. Enhances osmotic stress-induced phosphorylation of ATF2 and ATF2-mediated transcription. Involved in ciliogenesis, regulates cilia length through its interaction with CCDC28B independently of mTORC2 complex. The protein is Target of rapamycin complex 2 subunit MAPKAP1 (MAPKAP1) of Pongo abelii (Sumatran orangutan).